The following is a 443-amino-acid chain: Tubulin epsilon and delta complex protein 2 (443 aa).

The stretch at 8–33 forms a coiled coil; that stretch reads RRLVAELRDALDSCAERQRQLEQSLR. Disordered stretches follow at residues 45–72 and 93–146; these read AETP…PSPQ and GLSK…PWVP. Residues 106–124 are compositionally biased toward low complexity; the sequence is LKSGSASTATKASAPPSTS.

As to quaternary structure, interacts with TEDC1. Found in a complex with TEDC1, TEDC2, TUBE1 and TUBD1.

It localises to the cell projection. The protein resides in the cilium. The protein localises to the cytoplasm. Its subcellular location is the cytoskeleton. It is found in the microtubule organizing center. It localises to the centrosome. The protein resides in the centriole. In terms of biological role, acts as a positive regulator of ciliary hedgehog signaling. Required for centriole stability. The protein is Tubulin epsilon and delta complex protein 2 of Bos taurus (Bovine).